We begin with the raw amino-acid sequence, 88 residues long: Large ribosomal subunit protein eL34 (88 aa).

The protein belongs to the eukaryotic ribosomal protein eL34 family.

This chain is Large ribosomal subunit protein eL34, found in Methanobrevibacter smithii (strain ATCC 35061 / DSM 861 / OCM 144 / PS).